We begin with the raw amino-acid sequence, 432 residues long: Probable N-acetylmuramoyl-L-alanine amidase AmiB (432 aa).

The N-terminal stretch at 1-20 (MKTKILFFLFFSTFSFSIFA) is a signal peptide. The MurNAc-LAA domain occupies 25–244 (IAIDPGHGGK…IAYMIYEGLV (220 aa)). 2 LysM domains span residues 292–335 (IRHI…SIKI) and 385–429 (LYHK…KIKL).

The protein belongs to the N-acetylmuramoyl-L-alanine amidase 3 family.

The protein localises to the periplasm. The catalysed reaction is Hydrolyzes the link between N-acetylmuramoyl residues and L-amino acid residues in certain cell-wall glycopeptides.. Its function is as follows. Cell-wall hydrolase involved in septum cleavage during cell division. In Haemophilus influenzae (strain ATCC 51907 / DSM 11121 / KW20 / Rd), this protein is Probable N-acetylmuramoyl-L-alanine amidase AmiB (amiB).